A 360-amino-acid chain; its full sequence is DNA ADP-ribosyl glycohydrolase (360 aa).

Residues 1 to 155 (MLRFVRGNLL…VYEPVENPKA (155 aa)) enclose the Macro domain. Residues 8–9 (NL), 20–22 (TVN), 31–34 (VALQ), and T79 each bind ADP-D-ribose. The active-site Nucleophile is K80. 117–121 (GAGNG) is an ADP-D-ribose binding site. The interval 167–338 (LTPARAALLK…VALDALLKRG (172 aa)) is interaction with DarT.

This sequence belongs to the DarG ADP-ribosyl glycohydrolase family. In terms of assembly, interacts (via C-terminus) with cognate toxin DarT; this heterodimeric complex neutralizes the toxic effect of DarT by preventing ssDNA binding to DarT and consequently inactivating the toxin by direct protein-protein interactions.

The enzyme catalyses an N-(ADP-alpha-D-ribosyl)-thymidine in DNA + H2O = a thymidine in DNA + ADP-D-ribose. Antitoxin component of the hybrid type II/IV toxin-antitoxin (TA) system DarTG, which plays a crucial role in controlling bacterial growth and bacteriophage infection. De-ADP-ribosylates DNA modified on thymidine by its cognate toxin DarT, which neutralizes the activity of cognate toxin DarT. Upon expression in E.coli neutralizes the effect of cognate toxin DarT. Upon expression in M.tuberculosis neutralizes the toxic effects of endogenous DarT. This is DNA ADP-ribosyl glycohydrolase from Thermus aquaticus (strain ATCC BAA-2747 / Y51MC23).